Consider the following 616-residue polypeptide: tRNA uridine 5-carboxymethylaminomethyl modification enzyme MnmG (616 aa).

Residues 10–15, V122, and S177 each bind FAD; that span reads GAGHAG. Position 271 to 285 (271 to 285) interacts with NAD(+); it reads GPRYCPSIEDKVVRF. An FAD-binding site is contributed by Q368.

It belongs to the MnmG family. In terms of assembly, homodimer. Heterotetramer of two MnmE and two MnmG subunits. Requires FAD as cofactor.

It is found in the cytoplasm. NAD-binding protein involved in the addition of a carboxymethylaminomethyl (cmnm) group at the wobble position (U34) of certain tRNAs, forming tRNA-cmnm(5)s(2)U34. The chain is tRNA uridine 5-carboxymethylaminomethyl modification enzyme MnmG from Malacoplasma penetrans (strain HF-2) (Mycoplasma penetrans).